The following is a 154-amino-acid chain: Endoribonuclease YbeY (154 aa).

3 residues coordinate Zn(2+): His115, His119, and His125.

This sequence belongs to the endoribonuclease YbeY family. Zn(2+) serves as cofactor.

The protein resides in the cytoplasm. In terms of biological role, single strand-specific metallo-endoribonuclease involved in late-stage 70S ribosome quality control and in maturation of the 3' terminus of the 16S rRNA. This Halorhodospira halophila (strain DSM 244 / SL1) (Ectothiorhodospira halophila (strain DSM 244 / SL1)) protein is Endoribonuclease YbeY.